Consider the following 406-residue polypeptide: Acetyltransferase sirH (406 aa).

Helical transmembrane passes span 9–29 (IFIE…FALG), 32–52 (AHTF…CQSL), 63–83 (LLSN…WILL), 295–315 (VQLF…ALLC), 323–343 (SALF…HVIA), and 358–378 (FIGF…WVGS).

Belongs to the wax synthase family.

The protein resides in the membrane. It participates in mycotoxin biosynthesis. Acetyltransferase; part of the gene cluster that mediates the biosynthesis of sirodesmin PL, an epipolythiodioxopiperazine (ETP) characterized by a disulfide bridged cyclic dipeptide and that acts as a phytotoxin which is involved in the blackleg didease of canola. SirD catalyzes the O-prenylation of L-tyrosine (L-Tyr) in the presence of dimethylallyl diphosphate (DMAPP) to yield 4-O-dimethylallyl-L-Tyr, and therefore represents probably the first pathway-specific enzyme in the biosynthesis of sirodesmin PL. 4-O-dimethylallyl-L-Tyr, then undergoes condensation with L-Ser in a reaction catalyzed by the non-ribosomal peptide synthase sirP to form the diketopiperazine (DKP) backbone. Further bishydroxylation of the DKP performed by the cytochrome P450 monooxygenase sirC leads to the production of the intermediate phomamide. This step is essential to form the reactive thiol group required for toxicity of sirodesmin PL. The next steps of sirodesmin biosynthesis are not well understood yet, but some predictions could be made from intermediate compounds identification. Phomamide is converted into phomalizarine via oxidation, probably by sirT. Further oxidation, methylation (by sirM or sirN) and reduction steps convert phomalizarine to deacetyl sirodesmin. Finally, acetyltransferase sirH probably acetylates deacetyl sirodesmin to produce sirodesmin PL. The sequence is that of Acetyltransferase sirH from Leptosphaeria maculans (Blackleg fungus).